The chain runs to 265 residues: Small ribosomal subunit protein eS4 (265 aa).

The S4 RNA-binding domain occupies 42–104 (LPLILIIRNR…TNENYRLLYD (63 aa)).

The protein belongs to the eukaryotic ribosomal protein eS4 family.

Its subcellular location is the cytoplasm. This Zea mays (Maize) protein is Small ribosomal subunit protein eS4 (RPS4).